The chain runs to 508 residues: Photosystem II CP47 reaction center protein (508 aa).

6 helical membrane passes run 21–36 (SVHI…WAGS), 101–115 (IVFS…IWHW), 140–156 (GIHL…SGAF), 203–218 (IAAG…FHLS), 237–252 (VLSS…AFIV), and 457–472 (TFAL…HGAR).

This sequence belongs to the PsbB/PsbC family. PsbB subfamily. In terms of assembly, PSII is composed of 1 copy each of membrane proteins PsbA, PsbB, PsbC, PsbD, PsbE, PsbF, PsbH, PsbI, PsbJ, PsbK, PsbL, PsbM, PsbT, PsbX, PsbY, PsbZ, Psb30/Ycf12, at least 3 peripheral proteins of the oxygen-evolving complex and a large number of cofactors. It forms dimeric complexes. Binds multiple chlorophylls. PSII binds additional chlorophylls, carotenoids and specific lipids. is required as a cofactor.

The protein resides in the plastid. It is found in the chloroplast thylakoid membrane. One of the components of the core complex of photosystem II (PSII). It binds chlorophyll and helps catalyze the primary light-induced photochemical processes of PSII. PSII is a light-driven water:plastoquinone oxidoreductase, using light energy to abstract electrons from H(2)O, generating O(2) and a proton gradient subsequently used for ATP formation. The chain is Photosystem II CP47 reaction center protein from Cycas taitungensis (Prince sago).